The chain runs to 116 residues: MNHYSFSSLIRAFIPLSLVIVSAAWQPAALADTRHIIVDSGDSTLSKEAARQSKEQWDSTRSLRNKVNNRVEKEFDKTEKAIDGREKCNASYNVNAYWENTTDRCLDRRTGRPVTP.

Residues 1-31 form the signal peptide; it reads MNHYSFSSLIRAFIPLSLVIVSAAWQPAALA.

The protein belongs to the UPF0482 family.

This chain is UPF0482 protein PC1_2049, found in Pectobacterium carotovorum subsp. carotovorum (strain PC1).